Consider the following 193-residue polypeptide: Probable GTP-binding protein EngB (193 aa).

The EngB-type G domain occupies 20–193 (GVPEVAFAGR…ELAHEISRCI (174 aa)). Residues 28–35 (GRSNVGKS), 55–59 (GSTRQ), 73–76 (DLPG), 140–143 (TKAD), and 171–176 (IMWVSS) contribute to the GTP site. Mg(2+)-binding residues include serine 35 and threonine 57.

The protein belongs to the TRAFAC class TrmE-Era-EngA-EngB-Septin-like GTPase superfamily. EngB GTPase family. Mg(2+) is required as a cofactor.

Its function is as follows. Necessary for normal cell division and for the maintenance of normal septation. The sequence is that of Probable GTP-binding protein EngB from Anaplasma phagocytophilum (strain HZ).